The chain runs to 137 residues: uncharacterized protein (137 aa).

One can recognise a CENP-V/GFA domain in the interval 4–118; the sequence is YEGNCLCKAI…CIDDKPDCYD (115 aa). The Zn(2+) site is built by Cys-8, Cys-10, Cys-27, Cys-29, Cys-32, Cys-71, and Cys-74.

This sequence belongs to the Gfa family. It depends on Zn(2+) as a cofactor.

It is found in the cytoplasm. It localises to the nucleus. This is an uncharacterized protein from Schizosaccharomyces pombe (strain 972 / ATCC 24843) (Fission yeast).